Here is a 94-residue protein sequence, read N- to C-terminus: Evasin P1172 (94 aa).

3 cysteine pairs are disulfide-bonded: cysteine 35–cysteine 54, cysteine 39–cysteine 56, and cysteine 50–cysteine 67. Asparagine 38, asparagine 44, asparagine 53, and asparagine 80 each carry an N-linked (GlcNAc...) asparagine glycan.

Its subcellular location is the secreted. Its function is as follows. Salivary chemokine-binding protein which binds to host chemokines CXCL1, CXCL2, CXCL5 and CXCL8. The polypeptide is Evasin P1172 (Ixodes ricinus (Common tick)).